The primary structure comprises 176 residues: Crossover junction endodeoxyribonuclease RuvC (176 aa).

Catalysis depends on residues Asp10, Glu69, and Asp141. Positions 10, 69, and 141 each coordinate Mg(2+).

Belongs to the RuvC family. Homodimer which binds Holliday junction (HJ) DNA. The HJ becomes 2-fold symmetrical on binding to RuvC with unstacked arms; it has a different conformation from HJ DNA in complex with RuvA. In the full resolvosome a probable DNA-RuvA(4)-RuvB(12)-RuvC(2) complex forms which resolves the HJ. The cofactor is Mg(2+).

The protein localises to the cytoplasm. It catalyses the reaction Endonucleolytic cleavage at a junction such as a reciprocal single-stranded crossover between two homologous DNA duplexes (Holliday junction).. In terms of biological role, the RuvA-RuvB-RuvC complex processes Holliday junction (HJ) DNA during genetic recombination and DNA repair. Endonuclease that resolves HJ intermediates. Cleaves cruciform DNA by making single-stranded nicks across the HJ at symmetrical positions within the homologous arms, yielding a 5'-phosphate and a 3'-hydroxyl group; requires a central core of homology in the junction. The consensus cleavage sequence is 5'-(A/T)TT(C/G)-3'. Cleavage occurs on the 3'-side of the TT dinucleotide at the point of strand exchange. HJ branch migration catalyzed by RuvA-RuvB allows RuvC to scan DNA until it finds its consensus sequence, where it cleaves and resolves the cruciform DNA. This chain is Crossover junction endodeoxyribonuclease RuvC, found in Dichelobacter nodosus (strain VCS1703A).